The primary structure comprises 351 residues: MKAMAAEEEVDSADAGGGSGWLTGWLPTWCPTSTSHLKEAEEKMLKCVPCTYKKEPVRISNGNSIWTLMFSHNMSSKTPLVLLHGFGGGLGLWALNFEDLSTDRPVYAFDLLGFGRSSRPRFDSDAEEVENQFVESIEEWRCALRLDKMILLGHNLGGFLAAAYSLKYPSRVSHLILVEPWGFPERPDLADQERPIPVWIRALGAALTPFNPLAGLRIAGPFGLSLVQRLRPDFKRKYSSMFEDDTVTEYIYHCNVQTPSGETAFKNMTIPYGWAKRPMLQRIGGLHPDIPVSVIFGARSCIDGNSGTSIQSLRPKSYVKTIAILGAGHYVYADQPEEFNQKVKEICHTVD.

The AB hydrolase-1 domain maps to 79 to 184 (PLVLLHGFGG…LILVEPWGFP (106 aa)). Phosphoserine is present on serine 124. Positions 329 to 334 (HYVYAD) match the HXXXXD motif motif.

The protein belongs to the peptidase S33 family. ABHD4/ABHD5 subfamily. As to quaternary structure, interacts with ADRP and PLIN. Interacts with PNPLA2. Interacts with PLIN5; promotes interaction with PNPLA2.

It localises to the cytoplasm. Its subcellular location is the lipid droplet. The catalysed reaction is a 1-acyl-sn-glycero-3-phosphate + an acyl-CoA = a 1,2-diacyl-sn-glycero-3-phosphate + CoA. It catalyses the reaction 1-(9Z-octadecenoyl)-sn-glycero-3-phosphate + (9Z)-octadecenoyl-CoA = 1,2-di-(9Z-octadecenoyl)-sn-glycero-3-phosphate + CoA. It carries out the reaction 1-(9Z-octadecenoyl)-sn-glycero-3-phosphate + hexadecanoyl-CoA = 1-(9Z)-octadecenoyl-2-hexadecanoyl-sn-glycero-3-phosphate + CoA. The enzyme catalyses 1-(9Z-octadecenoyl)-sn-glycero-3-phosphate + octadecanoyl-CoA = 1-(9Z-octadecenoyl)-2-octadecanoyl-sn-glycero-3-phosphate + CoA. The catalysed reaction is 1-(9Z-octadecenoyl)-sn-glycero-3-phosphate + (5Z,8Z,11Z,14Z)-eicosatetraenoyl-CoA = 1-(9Z)-octadecenoyl-2-(5Z,8Z,11Z,14Z)-eicosatetraenoyl-sn-glycero-3-phosphate + CoA. It catalyses the reaction eicosanoyl-CoA + 1-(9Z-octadecenoyl)-sn-glycero-3-phosphate = 1-(9Z)-octadecenoyl-2-eicosanoyl-sn-glycero-3-phosphate + CoA. It carries out the reaction 1-hexadecanoyl-sn-glycero-3-phosphate + (9Z)-octadecenoyl-CoA = 1-hexadecanoyl-2-(9Z-octadecenoyl)-sn-glycero-3-phosphate + CoA. The enzyme catalyses 1-octadecanoyl-sn-glycero-3-phosphate + (9Z)-octadecenoyl-CoA = 1-octadecanoyl-2-(9Z-octadecenoyl)-sn-glycero-3-phosphate + CoA. The catalysed reaction is 1-(5Z,8Z,11Z,14Z-eicosatetraenoyl)-sn-glycero-3-phosphate + (9Z)-octadecenoyl-CoA = 1-(5Z,8Z,11Z,14Z)-eicosatetraenoyl-2-(9Z)-octadecenoyl-sn-glycero-3-phosphate + CoA. Acyltransferase activity is inhibited by detergents such as Triton X-100 and 3-[(3-cholamidopropyl)dimethylammonio]-1-propanesulfonate (CHAPS). Acyltransferase activity is inhibited by the presence of magnesium and calcium. Its function is as follows. Coenzyme A-dependent lysophosphatidic acid acyltransferase that catalyzes the transfer of an acyl group on a lysophosphatidic acid. Functions preferentially with 1-oleoyl-lysophosphatidic acid followed by 1-palmitoyl-lysophosphatidic acid, 1-stearoyl-lysophosphatidic acid and 1-arachidonoyl-lysophosphatidic acid as lipid acceptor. Functions preferentially with arachidonoyl-CoA followed by oleoyl-CoA as acyl group donors. Functions in phosphatidic acid biosynthesis. May regulate the cellular storage of triacylglycerol through activation of the phospholipase PNPLA2. Involved in keratinocyte differentiation. Regulates lipid droplet fusion. The sequence is that of 1-acylglycerol-3-phosphate O-acyltransferase ABHD5 from Rattus norvegicus (Rat).